The sequence spans 142 residues: Putative pre-16S rRNA nuclease (142 aa).

It belongs to the YqgF nuclease family.

Its subcellular location is the cytoplasm. Functionally, could be a nuclease involved in processing of the 5'-end of pre-16S rRNA. This Photobacterium profundum (strain SS9) protein is Putative pre-16S rRNA nuclease.